We begin with the raw amino-acid sequence, 205 residues long: Large ribosomal subunit protein uL18 (205 aa).

Belongs to the universal ribosomal protein uL18 family. In terms of assembly, part of the 50S ribosomal subunit. Contacts the 5S and 23S rRNAs.

Functionally, this is one of the proteins that bind and probably mediate the attachment of the 5S RNA into the large ribosomal subunit, where it forms part of the central protuberance. The sequence is that of Large ribosomal subunit protein uL18 from Pyrobaculum islandicum (strain DSM 4184 / JCM 9189 / GEO3).